Consider the following 401-residue polypeptide: MIIKPKIRGFICTTTHPVGCEANVQEQITFTKNKGKIANGPKKVLVVGSSSGYGLSSRIAAAFGCDAATIGVFFEKPGTETKPGTAGWYNSAAFDKFAKAEGLYSKSINCDAFSHEAKQKVIELIKQDLGEIDMVVYSLASPVRRLPDSGEVIRSALKPIGETYTATAVDTNKDCIIEATVEPATEQEIADTVTVMGGQDWELWIKALSEAGVLANNCKTVAYSYIGTELTWPIYWHGALGKAKMDLDRAAKALNDQLSATGGSANVAVLKSVVTQASSAIPVMPLYIAMVFKKMRQEGLHEGCMEQIYRMFSERLYRTDGAKPETDSDNRLRLDDWELRDDIQQHCRDLWPQVTTENLSELTDYREYKAEFIKLFGFGIEGIDYDADVNPYVEFDVIELQ.

NAD(+) is bound by residues 48 to 53, 74 to 75, 111 to 112, and 139 to 140; these read GSSSGY, FE, DA, and LA. Tyrosine 225 contributes to the substrate binding site. Tyrosine 235 acts as the Proton donor in catalysis. Residues lysine 244 and 273-275 each bind NAD(+); that span reads VVT.

It belongs to the TER reductase family. Monomer.

The enzyme catalyses a 2,3-saturated acyl-[ACP] + NAD(+) = a (2E)-enoyl-[ACP] + NADH + H(+). It functions in the pathway lipid metabolism; fatty acid biosynthesis. Its function is as follows. Involved in the final reduction of the elongation cycle of fatty acid synthesis (FAS II). Catalyzes the reduction of a carbon-carbon double bond in an enoyl moiety that is covalently linked to an acyl carrier protein (ACP). The chain is Enoyl-[acyl-carrier-protein] reductase [NADH] from Shewanella putrefaciens (strain CN-32 / ATCC BAA-453).